Reading from the N-terminus, the 105-residue chain is uncharacterized protein (105 aa).

Residues 64 to 84 traverse the membrane as a helical segment; that stretch reads ILLISIFFLLLFALPQHTMGI.

It localises to the membrane. This is an uncharacterized protein from Saccharomyces cerevisiae (strain ATCC 204508 / S288c) (Baker's yeast).